The sequence spans 647 residues: Putative ferric-chelate reductase 1 homolog (647 aa).

Residues 10 to 30 (WLATLVTALLAVAIWPDPGQS) traverse the membrane as a helical segment. In terms of domain architecture, Reelin spans 25–195 (PDPGQSLPQG…AAPPLPTQSP (171 aa)). 2 N-linked (GlcNAc...) asparagine glycosylation sites follow: Asn-127 and Asn-158. Residues 245–368 (TKSCTSITVV…GKYHLLVASG (124 aa)) form the DOMON domain. Residues 372–570 (KENSVGYHDI…HLIFSIGGMA (199 aa)) enclose the Cytochrome b561 domain. A helical transmembrane segment spans residues 408–428 (LHGAFMIAAWIGTTSLGIIFA). Positions 409 and 450 each coordinate heme b. 5 helical membrane passes run 452-472 (LLMV…WVEL), 480-500 (HSII…GALF), 515-535 (GHWL…FFSV), 548-568 (WILV…SIGG), and 616-636 (LLGV…LLVV). Heme b is bound by residues His-480 and His-516.

Belongs to the FRRS1 family. Requires heme b as cofactor.

It is found in the membrane. Functionally, putative ferric-chelate reductases reduce Fe(3+) to Fe(2+) before its transport from the endosome to the cytoplasm. This Drosophila melanogaster (Fruit fly) protein is Putative ferric-chelate reductase 1 homolog.